A 94-amino-acid polypeptide reads, in one-letter code: Small ribosomal subunit protein bS18 (94 aa).

Positions 1 to 11 (MANERPTSQQR) are enriched in polar residues. Residues 1-24 (MANERPTSQQRPAGGPRKRRPFQR) are disordered.

This sequence belongs to the bacterial ribosomal protein bS18 family. As to quaternary structure, part of the 30S ribosomal subunit. Forms a tight heterodimer with protein bS6.

Functionally, binds as a heterodimer with protein bS6 to the central domain of the 16S rRNA, where it helps stabilize the platform of the 30S subunit. In Pelobacter propionicus (strain DSM 2379 / NBRC 103807 / OttBd1), this protein is Small ribosomal subunit protein bS18.